The chain runs to 159 residues: SsrA-binding protein (159 aa).

Belongs to the SmpB family.

It is found in the cytoplasm. Its function is as follows. Required for rescue of stalled ribosomes mediated by trans-translation. Binds to transfer-messenger RNA (tmRNA), required for stable association of tmRNA with ribosomes. tmRNA and SmpB together mimic tRNA shape, replacing the anticodon stem-loop with SmpB. tmRNA is encoded by the ssrA gene; the 2 termini fold to resemble tRNA(Ala) and it encodes a 'tag peptide', a short internal open reading frame. During trans-translation Ala-aminoacylated tmRNA acts like a tRNA, entering the A-site of stalled ribosomes, displacing the stalled mRNA. The ribosome then switches to translate the ORF on the tmRNA; the nascent peptide is terminated with the 'tag peptide' encoded by the tmRNA and targeted for degradation. The ribosome is freed to recommence translation, which seems to be the essential function of trans-translation. The chain is SsrA-binding protein from Saccharophagus degradans (strain 2-40 / ATCC 43961 / DSM 17024).